Reading from the N-terminus, the 137-residue chain is Ribosome-binding factor A (137 aa).

This sequence belongs to the RbfA family. As to quaternary structure, monomer. Binds 30S ribosomal subunits, but not 50S ribosomal subunits or 70S ribosomes.

The protein localises to the cytoplasm. One of several proteins that assist in the late maturation steps of the functional core of the 30S ribosomal subunit. Associates with free 30S ribosomal subunits (but not with 30S subunits that are part of 70S ribosomes or polysomes). Required for efficient processing of 16S rRNA. May interact with the 5'-terminal helix region of 16S rRNA. The polypeptide is Ribosome-binding factor A (Cereibacter sphaeroides (strain ATCC 17029 / ATH 2.4.9) (Rhodobacter sphaeroides)).